The primary structure comprises 418 residues: Centromere protein U (418 aa).

Residues 1-11 (MAPRGRRRPRP) show a composition bias toward basic residues. The segment at 1 to 76 (MAPRGRRRPR…TYETFDPPLH (76 aa)) is disordered. The Nuclear localization signal signature appears at 6 to 23 (RRRPRPHRSEGARRSKNT). A compositionally biased stretch (basic and acidic residues) spans 12-42 (HRSEGARRSKNTLERTHSMKDKAGQKCKPID). Thr78 carries the post-translational modification Phosphothreonine; by PLK1. Positions 88–227 (SKHCGLSLSS…KRKKSRSKAI (140 aa)) are disordered. Thr98 carries the post-translational modification Phosphothreonine. Ser108 is subject to Phosphoserine. Thr110 bears the Phosphothreonine mark. 3 positions are modified to phosphoserine: Ser111, Ser116, and Ser120. Residues 124–133 (SAKKPGRKLR) show a composition bias toward basic residues. Residues Ser136, Ser139, and Ser141 each carry the phosphoserine modification. The span at 145-165 (SDTRRKVKSAEKISTQRHEVI) shows a compositional bias: basic and acidic residues. The segment covering 180-193 (SVTSKKTGPLSAQP) has biased composition (polar residues). Lys185 is covalently cross-linked (Glycyl lysine isopeptide (Lys-Gly) (interchain with G-Cter in SUMO2)). Phosphoserine occurs at positions 190 and 194. The segment covering 208–224 (TQKKGKISHDKRKKSRS) has biased composition (basic residues). Phosphoserine is present on Ser232. Coiled coils occupy residues 297-356 (QMLT…NAAY) and 397-417 (LLGAESHLRNINHQLEKLLDQ). Residues 303–320 (KRKNAKMISDIEKKRQRM) carry the Nuclear localization signal motif.

It belongs to the CENP-U/AME1 family. Component of the CENPA-NAC complex, at least composed of CENPA, CENPC, CENPH, CENPM, CENPN, CENPT and CENPU. The CENPA-NAC complex interacts with the CENPA-CAD complex, composed of CENPI, CENPK, CENPL, CENPO, CENPP, CENPQ, CENPR and CENPS. Interacts with MLF1. Interacts with PLK1. In terms of assembly, (Microbial infection) Interacts with the N-terminal domain of Kaposi's sarcoma-associated herpesvirus latent nuclear antigen (LNA). In terms of processing, phosphorylated by PLK1 at Thr-78, creating a self-tethering site that specifically interacts with the polo-box domain of PLK1. Expressed at high levels in the testis, fetal liver, thymus, bone marrow and at lower levels in the lymph nodes, placenta, colon and spleen. Present in all cell lines examined, including B-cells, T-cells, epithelial cells and fibroblast cells. Expressed at high levels in glioblastoma cell lines.

Its subcellular location is the cytoplasm. It is found in the nucleus. It localises to the chromosome. The protein resides in the centromere. The protein localises to the kinetochore. Component of the CENPA-NAC (nucleosome-associated) complex, a complex that plays a central role in assembly of kinetochore proteins, mitotic progression and chromosome segregation. The CENPA-NAC complex recruits the CENPA-CAD (nucleosome distal) complex and may be involved in incorporation of newly synthesized CENPA into centromeres. Plays an important role in the correct PLK1 localization to the mitotic kinetochores. A scaffold protein responsible for the initial recruitment and maintenance of the kinetochore PLK1 population until its degradation. Involved in transcriptional repression. This chain is Centromere protein U (CENPU), found in Homo sapiens (Human).